Here is a 415-residue protein sequence, read N- to C-terminus: 3-isopropylmalate dehydratase large subunit (415 aa).

The [4Fe-4S] cluster site is built by Cys297, Cys355, and Cys358.

This sequence belongs to the aconitase/IPM isomerase family. LeuC type 2 subfamily. In terms of assembly, heterodimer of LeuC and LeuD. [4Fe-4S] cluster serves as cofactor.

The catalysed reaction is (2R,3S)-3-isopropylmalate = (2S)-2-isopropylmalate. It participates in amino-acid biosynthesis; L-leucine biosynthesis; L-leucine from 3-methyl-2-oxobutanoate: step 2/4. Functionally, catalyzes the isomerization between 2-isopropylmalate and 3-isopropylmalate, via the formation of 2-isopropylmaleate. The polypeptide is 3-isopropylmalate dehydratase large subunit (Metallosphaera sedula (strain ATCC 51363 / DSM 5348 / JCM 9185 / NBRC 15509 / TH2)).